We begin with the raw amino-acid sequence, 54 residues long: ATP synthase protein 8 (54 aa).

A helical transmembrane segment spans residues I13–L32.

This sequence belongs to the ATPase protein 8 family. In terms of assembly, F-type ATPases have 2 components, CF(1) - the catalytic core - and CF(0) - the membrane proton channel.

It localises to the mitochondrion membrane. Mitochondrial membrane ATP synthase (F(1)F(0) ATP synthase or Complex V) produces ATP from ADP in the presence of a proton gradient across the membrane which is generated by electron transport complexes of the respiratory chain. F-type ATPases consist of two structural domains, F(1) - containing the extramembraneous catalytic core and F(0) - containing the membrane proton channel, linked together by a central stalk and a peripheral stalk. During catalysis, ATP synthesis in the catalytic domain of F(1) is coupled via a rotary mechanism of the central stalk subunits to proton translocation. Part of the complex F(0) domain. Minor subunit located with subunit a in the membrane. The chain is ATP synthase protein 8 (atp-8) from Neurospora crassa (strain ATCC 24698 / 74-OR23-1A / CBS 708.71 / DSM 1257 / FGSC 987).